The primary structure comprises 126 residues: MQRTMLKSKLHRVHVTHSELDYEGSCAIDEALLEAADIKEYQQIDIYNVNNGERFTTYAIRAERNSGIISVNGAAARKASPGDLLIIATYASYTEAELAQFKPQLVYVDADNRIKNQRQHIPVQAA.

S25 serves as the catalytic Schiff-base intermediate with substrate; via pyruvic acid. S25 is modified (pyruvic acid (Ser)). T57 serves as a coordination point for substrate. Residue Y58 is the Proton donor of the active site. A substrate-binding site is contributed by 73–75 (GAA).

It belongs to the PanD family. Heterooctamer of four alpha and four beta subunits. The cofactor is pyruvate. Is synthesized initially as an inactive proenzyme, which is activated by self-cleavage at a specific serine bond to produce a beta-subunit with a hydroxyl group at its C-terminus and an alpha-subunit with a pyruvoyl group at its N-terminus.

It localises to the cytoplasm. It catalyses the reaction L-aspartate + H(+) = beta-alanine + CO2. It participates in cofactor biosynthesis; (R)-pantothenate biosynthesis; beta-alanine from L-aspartate: step 1/1. Its function is as follows. Catalyzes the pyruvoyl-dependent decarboxylation of aspartate to produce beta-alanine. This is Aspartate 1-decarboxylase from Methylobacillus flagellatus (strain ATCC 51484 / DSM 6875 / VKM B-1610 / KT).